The sequence spans 290 residues: Nucleotide-binding protein Aave_3603 (290 aa).

Position 13–20 (13–20 (GMSGSGKS)) interacts with ATP. 62–65 (DVRS) serves as a coordination point for GTP.

Belongs to the RapZ-like family.

Functionally, displays ATPase and GTPase activities. In Paracidovorax citrulli (strain AAC00-1) (Acidovorax citrulli), this protein is Nucleotide-binding protein Aave_3603.